Consider the following 204-residue polypeptide: Large ribosomal subunit protein uL4 (204 aa).

The segment at 53 to 74 (AYVSGGGKKPWRQKGRGGARAG) is disordered.

It belongs to the universal ribosomal protein uL4 family. Part of the 50S ribosomal subunit.

One of the primary rRNA binding proteins, this protein initially binds near the 5'-end of the 23S rRNA. It is important during the early stages of 50S assembly. It makes multiple contacts with different domains of the 23S rRNA in the assembled 50S subunit and ribosome. Its function is as follows. Forms part of the polypeptide exit tunnel. This is Large ribosomal subunit protein uL4 from Campylobacter curvus (strain 525.92).